A 108-amino-acid chain; its full sequence is Thiosulfate sulfurtransferase GlpE (108 aa).

The Rhodanese domain occupies 17-105; the sequence is QEKEAVLVDI…WQRQFPAEVA (89 aa). The active-site Cysteine persulfide intermediate is cysteine 65.

This sequence belongs to the GlpE family.

The protein resides in the cytoplasm. The enzyme catalyses thiosulfate + hydrogen cyanide = thiocyanate + sulfite + 2 H(+). It catalyses the reaction thiosulfate + [thioredoxin]-dithiol = [thioredoxin]-disulfide + hydrogen sulfide + sulfite + 2 H(+). In terms of biological role, transferase that catalyzes the transfer of sulfur from thiosulfate to thiophilic acceptors such as cyanide or dithiols. May function in a CysM-independent thiosulfate assimilation pathway by catalyzing the conversion of thiosulfate to sulfite, which can then be used for L-cysteine biosynthesis. The polypeptide is Thiosulfate sulfurtransferase GlpE (Escherichia coli O45:K1 (strain S88 / ExPEC)).